A 498-amino-acid chain; its full sequence is Ulvan-active sulfatase (498 aa).

The signal sequence occupies residues 1 to 22; that stretch reads MNSKKTGVIILGCIAFLHIACS. Ca(2+) contacts are provided by aspartate 55, aspartate 56, cysteine 95, aspartate 266, and histidine 267. Residue cysteine 95 is the Nucleophile of the active site. Cysteine 95 carries the post-translational modification 3-oxoalanine (Cys).

Belongs to the sulfatase family. Requires Ca(2+) as cofactor. In terms of processing, the conversion to 3-oxoalanine (also known as C-formylglycine, FGly), of a serine or cysteine residue in prokaryotes and of a cysteine residue in eukaryotes, is critical for catalytic activity. This post-translational modification is severely defective in multiple sulfatase deficiency (MSD).

The protein resides in the periplasm. Functionally, sulfatase involved in ulvan degradation. Ulvan is the main polysaccharide component of the Ulvales (green seaweed) cell wall. It is composed of disaccharide building blocks comprising 3-sulfated rhamnose (Rha3S) linked to D-glucuronic acid (GlcA), L-iduronic acid (IduA), or D-xylose (Xyl). The protein is Ulvan-active sulfatase of Formosa agariphila (strain DSM 15362 / KCTC 12365 / LMG 23005 / KMM 3901 / M-2Alg 35-1).